We begin with the raw amino-acid sequence, 251 residues long: MWIGIISLFPEMFKAITDFGVTGRAVKQDLLQIQCWNPRDFTFDKHKTVDDRPYGGGPGMLMMVQPLRDAIHAAKQAAKAEDGVEAKVIYLSPQGRKLDQQGVKTLASNQKLILICGRYEGVDERLIQTEVDEEWSIGDYVLTGGELPAMTLIDAVARFVPGVLGKQASADEDSFATGLLDCPHYTRPEMLDGIPVPEVLMSGHHENIRKWRLEQSLERTWLRRPELLDSLALTDEQRVLLAKIKKQHKIS.

Residues G117 and 137-142 (IGDYVL) each bind S-adenosyl-L-methionine.

This sequence belongs to the RNA methyltransferase TrmD family. In terms of assembly, homodimer.

Its subcellular location is the cytoplasm. It catalyses the reaction guanosine(37) in tRNA + S-adenosyl-L-methionine = N(1)-methylguanosine(37) in tRNA + S-adenosyl-L-homocysteine + H(+). Specifically methylates guanosine-37 in various tRNAs. This Actinobacillus pleuropneumoniae serotype 5b (strain L20) protein is tRNA (guanine-N(1)-)-methyltransferase.